A 181-amino-acid chain; its full sequence is Inner membrane-spanning protein YciB (181 aa).

A run of 5 helical transmembrane segments spans residues 22–42 (IYTA…VTYA), 50–70 (MQLI…FLHD), 80–100 (IVYC…KPVI), 122–142 (WVLF…EMPL), and 148–168 (FKVF…GMYV).

The protein belongs to the YciB family.

The protein localises to the cell inner membrane. Its function is as follows. Plays a role in cell envelope biogenesis, maintenance of cell envelope integrity and membrane homeostasis. This chain is Inner membrane-spanning protein YciB, found in Aliivibrio fischeri (strain MJ11) (Vibrio fischeri).